The sequence spans 494 residues: Transcription termination factor MTERF4, chloroplastic (494 aa).

A chloroplast-targeting transit peptide spans 1–54 (MMKSLLFSAHPTSLLLPAPRLRRLLRLRAASSASASAPPRADRRSPGTPSRRPS). Disordered regions lie at residues 32-61 (SASASAPPRADRRSPGTPSRRPSSSLYARP) and 457-494 (VEEMEREDSSDMNASVDEVESEEYEDSDYGDSDDEFVR). Residues 46–56 (PGTPSRRPSSS) show a composition bias toward low complexity. Composition is skewed to acidic residues over residues 457–466 (VEEMEREDSS) and 473–494 (DEVESEEYEDSDYGDSDDEFVR).

It belongs to the mTERF family.

It is found in the plastid. The protein resides in the chloroplast stroma. In terms of biological role, transcription termination factor required for processing and steady-state levels of plastid transcripts. Required for splicing of the chloroplastic group II intron. Required for the accumulation of 16S and 23S ribosomes. The chain is Transcription termination factor MTERF4, chloroplastic from Zea mays (Maize).